A 214-amino-acid chain; its full sequence is dITP/XTP pyrophosphatase (214 aa).

13-18 (SHNAGK) provides a ligand contact to substrate. Residues Asp-45 and Asp-74 each coordinate Mg(2+). The active-site Proton acceptor is Asp-74. Residues Ser-75, 163 to 166 (FGYD), Lys-186, and 199 to 200 (HR) each bind substrate.

It belongs to the HAM1 NTPase family. As to quaternary structure, homodimer. It depends on Mg(2+) as a cofactor.

It catalyses the reaction XTP + H2O = XMP + diphosphate + H(+). The catalysed reaction is dITP + H2O = dIMP + diphosphate + H(+). The enzyme catalyses ITP + H2O = IMP + diphosphate + H(+). Its function is as follows. Pyrophosphatase that catalyzes the hydrolysis of nucleoside triphosphates to their monophosphate derivatives, with a high preference for the non-canonical purine nucleotides XTP (xanthosine triphosphate), dITP (deoxyinosine triphosphate) and ITP. Seems to function as a house-cleaning enzyme that removes non-canonical purine nucleotides from the nucleotide pool, thus preventing their incorporation into DNA/RNA and avoiding chromosomal lesions. This is dITP/XTP pyrophosphatase from Rhizobium meliloti (strain 1021) (Ensifer meliloti).